We begin with the raw amino-acid sequence, 779 residues long: Acyl-CoA dehydrogenase family member 11 (779 aa).

Lys175 is subject to N6-acetyllysine. Ser210 is modified (phosphoserine). Tyr323 is modified (phosphotyrosine). Residues Lys368 and Lys390 each carry the N6-succinyllysine modification. Residues 503-513 (FCMTEPNVSSS), 511-513 (SSS), 537-539 (WSS), and Ser539 each bind FAD. Ser513 is a binding site for substrate. 628–631 (GPGR) is a substrate binding site. Residues Arg656, Gln726, and 726–730 (QVHGG) contribute to the FAD site. Gly754 serves as a coordination point for substrate. FAD contacts are provided by residues 755 to 757 (PDE) and Glu757. Lys765 is modified (N6-acetyllysine).

It belongs to the acyl-CoA dehydrogenase family. As to quaternary structure, homodimer. FAD serves as cofactor.

It localises to the peroxisome. The protein resides in the mitochondrion membrane. It catalyses the reaction a 2,3-saturated acyl-CoA + oxidized [electron-transfer flavoprotein] + H(+) = a (2E)-enoyl-CoA + reduced [electron-transfer flavoprotein]. The enzyme catalyses docosanoyl-CoA + oxidized [electron-transfer flavoprotein] + H(+) = (2E)-docosenoyl-CoA + reduced [electron-transfer flavoprotein]. The catalysed reaction is tetracosanoyl-CoA + oxidized [electron-transfer flavoprotein] + H(+) = (2E)-tetracosenoyl-CoA + reduced [electron-transfer flavoprotein]. It carries out the reaction eicosanoyl-CoA + oxidized [electron-transfer flavoprotein] + H(+) = (2E)-eicosenoyl-CoA + reduced [electron-transfer flavoprotein]. It catalyses the reaction hexacosanoyl-CoA + oxidized [electron-transfer flavoprotein] + H(+) = (2E)-hexacosenoyl-CoA + reduced [electron-transfer flavoprotein]. The enzyme catalyses tricosanoyl-CoA + oxidized [electron-transfer flavoprotein] + H(+) = (2E)-tricosenoyl-CoA + reduced [electron-transfer flavoprotein]. It functions in the pathway lipid metabolism; fatty acid beta-oxidation. In terms of biological role, acyl-CoA dehydrogenase, that exhibits maximal activity towards saturated C22-CoA. Probably participates in beta-oxydation and energy production but could also play a role in the metabolism of specific fatty acids to control fatty acids composition of cellular lipids in brain. The sequence is that of Acyl-CoA dehydrogenase family member 11 (Acad11) from Rattus norvegicus (Rat).